The following is a 32-amino-acid chain: MPCSCKKYCDPWEVIDGSCGLFNSKYICCREK.

3 cysteine pairs are disulfide-bonded: C3-C29, C5-C19, and C9-C28.

It is found in the secreted. In terms of biological role, has antimicrobial activity against E.coli and activates ion channel activity. In Oryctolagus cuniculus (Rabbit), this protein is Corticostatin-related peptide RK-1.